A 449-amino-acid chain; its full sequence is Glucose-6-phosphate isomerase (449 aa).

Glu291 (proton donor) is an active-site residue. Catalysis depends on residues His312 and Lys426.

Belongs to the GPI family.

The protein localises to the cytoplasm. It carries out the reaction alpha-D-glucose 6-phosphate = beta-D-fructose 6-phosphate. Its pathway is carbohydrate biosynthesis; gluconeogenesis. The protein operates within carbohydrate degradation; glycolysis; D-glyceraldehyde 3-phosphate and glycerone phosphate from D-glucose: step 2/4. In terms of biological role, catalyzes the reversible isomerization of glucose-6-phosphate to fructose-6-phosphate. This is Glucose-6-phosphate isomerase from Streptococcus pneumoniae (strain CGSP14).